Here is a 262-residue protein sequence, read N- to C-terminus: Nickel import ATP-binding protein NikD (262 aa).

An ABC transporter domain is found at 6–249 (LAIEGLTATT…PGHEVTRMLV (244 aa)). 42–49 (GASGSGKS) contacts ATP.

This sequence belongs to the ABC transporter superfamily. Nickel importer (TC 3.A.1.5.3) family. In terms of assembly, the complex is composed of two ATP-binding proteins (NikD and NikE), two transmembrane proteins (NikB and NikC) and a solute-binding protein (NikA).

Its subcellular location is the cell inner membrane. The catalysed reaction is Ni(2+)(out) + ATP + H2O = Ni(2+)(in) + ADP + phosphate + H(+). Part of the ABC transporter complex NikABCDE involved in nickel import. Responsible for energy coupling to the transport system. The protein is Nickel import ATP-binding protein NikD of Brucella suis biovar 1 (strain 1330).